The following is a 140-amino-acid chain: Putative pre-16S rRNA nuclease (140 aa).

The protein belongs to the YqgF nuclease family.

It is found in the cytoplasm. In terms of biological role, could be a nuclease involved in processing of the 5'-end of pre-16S rRNA. This chain is Putative pre-16S rRNA nuclease, found in Mannheimia succiniciproducens (strain KCTC 0769BP / MBEL55E).